We begin with the raw amino-acid sequence, 407 residues long: Probable tRNA pseudouridine synthase D (407 aa).

The active-site Nucleophile is Asp81. Residues 151–372 (GFPNYFGIQR…PGGRRELLIR (222 aa)) form the TRUD domain.

Belongs to the pseudouridine synthase TruD family.

The catalysed reaction is uridine(13) in tRNA = pseudouridine(13) in tRNA. In terms of biological role, could be responsible for synthesis of pseudouridine from uracil-13 in transfer RNAs. The chain is Probable tRNA pseudouridine synthase D from Pyrococcus furiosus (strain ATCC 43587 / DSM 3638 / JCM 8422 / Vc1).